A 410-amino-acid chain; its full sequence is Neuroserpin (410 aa).

Residues 1–16 form the signal peptide; the sequence is MAFLGLFSLLVLQSMA. 3 N-linked (GlcNAc...) asparagine glycosylation sites follow: Asn157, Asn321, and Asn401. An O-linked (Xyl...) (chondroitin sulfate) serine glycan is attached at Ser403.

The protein belongs to the serpin family. As to quaternary structure, monomer. Has a tendency to form large polymers already at 41 and 45 degrees Celsius (in vitro). As to expression, detected in brain cortex and hippocampus pyramidal neurons (at protein level). Detected in cerebrospinal fluid (at protein level). Predominantly expressed in the brain.

The protein localises to the secreted. It is found in the cytoplasmic vesicle. It localises to the secretory vesicle lumen. The protein resides in the perikaryon. Serine protease inhibitor that inhibits plasminogen activators and plasmin but not thrombin. May be involved in the formation or reorganization of synaptic connections as well as for synaptic plasticity in the adult nervous system. May protect neurons from cell damage by tissue-type plasminogen activator. The polypeptide is Neuroserpin (SERPINI1) (Homo sapiens (Human)).